A 220-amino-acid polypeptide reads, in one-letter code: 7-cyano-7-deazaguanine synthase (220 aa).

10–20 (FSGGQDSTTCL) serves as a coordination point for ATP. Cys188, Cys197, Cys200, and Cys203 together coordinate Zn(2+).

Belongs to the QueC family. Zn(2+) serves as cofactor.

It catalyses the reaction 7-carboxy-7-deazaguanine + NH4(+) + ATP = 7-cyano-7-deazaguanine + ADP + phosphate + H2O + H(+). Its pathway is purine metabolism; 7-cyano-7-deazaguanine biosynthesis. Catalyzes the ATP-dependent conversion of 7-carboxy-7-deazaguanine (CDG) to 7-cyano-7-deazaguanine (preQ(0)). The protein is 7-cyano-7-deazaguanine synthase of Neisseria meningitidis serogroup C (strain 053442).